The following is a 21-amino-acid chain: Peptide PGLa-R2 (21 aa).

Residue leucine 21 is modified to Leucine amide.

Expressed by the skin glands.

It localises to the secreted. Its function is as follows. Antimicrobial peptide. The chain is Peptide PGLa-R2 from Xenopus ruwenzoriensis (Uganda clawed frog).